Here is a 403-residue protein sequence, read N- to C-terminus: GPI-N-acetylgalactosamine transferase PGAP4 (403 aa).

Topologically, residues 1 to 22 (MTTSTSPAAMLLRRLRRLSWGS) are cytoplasmic. Residues 23 to 43 (TAVQLFILTVVTFGLLAPLAC) traverse the membrane as a helical segment. The Lumenal segment spans residues 44–264 (HRLLHSYFYL…INPEPMRILE (221 aa)). Val109 serves as a coordination point for UDP-N-acetyl-alpha-D-galactosamine. 2 disulfides stabilise this stretch: Cys132–Cys136 and Cys144–Cys194. The DXD motif signature appears at 211-213 (EDD). Residues 265 to 285 (WVGVGMLLGPVLTWIYMRFAC) traverse the membrane as a helical segment. The Cytoplasmic portion of the chain corresponds to 286–287 (RP). The chain crosses the membrane as a helical span at residues 288-308 (GFSWPVMLFFCLYSMGLVELV). The Lumenal portion of the chain corresponds to 309-403 (GRHYFLELRR…LRYNFHPSLL (95 aa)). Cys332 and Cys333 are disulfide-bonded. The UDP-N-acetyl-alpha-D-galactosamine site is built by Thr334, Pro335, and Lys362.

Belongs to the PGAP4 family. In terms of processing, glycosylated.

The protein localises to the golgi apparatus membrane. Its function is as follows. Golgi-resident glycosylphosphatidylinositol (GPI)-N-acetylgalactosamine transferase that catalyzes the N-acetyl-beta-D-galactosamine transfer from an UDP-N-acetyl-alpha-D-galactosamine to the 4-OH-position of first mannose of the glycosylphosphatidylinositol (GPI) of a GPI-anchored protein (GPI-AP). This modification occurs after the fatty acid remodeling step of the GPI-anchor maturation. In Mus musculus (Mouse), this protein is GPI-N-acetylgalactosamine transferase PGAP4.